The chain runs to 885 residues: Alanine--tRNA ligase (885 aa).

His571, His575, Cys674, and His678 together coordinate Zn(2+).

The protein belongs to the class-II aminoacyl-tRNA synthetase family. Zn(2+) is required as a cofactor.

The protein localises to the cytoplasm. It carries out the reaction tRNA(Ala) + L-alanine + ATP = L-alanyl-tRNA(Ala) + AMP + diphosphate. Its function is as follows. Catalyzes the attachment of alanine to tRNA(Ala) in a two-step reaction: alanine is first activated by ATP to form Ala-AMP and then transferred to the acceptor end of tRNA(Ala). Also edits incorrectly charged Ser-tRNA(Ala) and Gly-tRNA(Ala) via its editing domain. In Clavibacter sepedonicus (Clavibacter michiganensis subsp. sepedonicus), this protein is Alanine--tRNA ligase.